A 263-amino-acid polypeptide reads, in one-letter code: Glycerol uptake facilitator protein (263 aa).

At 1 to 7 (MNIYRKK) the chain is on the cytoplasmic side. The helical transmembrane segment at 8 to 36 (NIIKKCFMEFFGTGLVMFFGIGCLAASKL) threads the bilayer. The Extracellular portion of the chain corresponds to 37–41 (TNANF). Residues 42–62 (TQFEISCIWGFGVSIAIYFSS) traverse the membrane as a helical segment. The Cytoplasmic segment spans residues 63 to 65 (SIS). The stretch at 66–69 (GAHL) is an intramembrane region. The NPA 1 signature appears at 70-72 (NPA). The helical intramembrane region spans 70 to 80 (NPAVTIFFWLS). Over 81-86 (SKLNKR) the chain is Cytoplasmic. The helical transmembrane segment at 87–110 (KVLPYIISQTLGSFFFTMLTYYLY) threads the bilayer. The Extracellular segment spans residues 111-145 (NNLLISFERNNNVVRGTQESLNLASIFCVYPNYNN). A helical transmembrane segment spans residues 146–171 (SFIYDFIIEIFSTALFILIVLEFNNR). The Cytoplasmic portion of the chain corresponds to 172-181 (NSNYFLYNRS). Residues 182 to 198 (VAPILTGFLVCMINLVI) traverse the membrane as a helical segment. The Extracellular portion of the chain corresponds to 199 to 202 (NPLN). Residues 203 to 206 (NISL) lie within the membrane without spanning it. The NPA 2 signature appears at 207-209 (NPA). Positions 207-220 (NPARDLGPKILLSL) form an intramembrane region, helical. Topologically, residues 221–236 (TGWGLFSFTGGNDNIL) are extracellular. The chain crosses the membrane as a helical span at residues 237–259 (YCFIPIMGPILGANLGGWIHKTL). At 260-263 (INNS) the chain is on the cytoplasmic side.

The protein belongs to the MIP/aquaporin (TC 1.A.8) family.

It is found in the cell membrane. It carries out the reaction glycerol(in) = glycerol(out). Functionally, mediates glycerol diffusion across the cytoplasmic membrane via a pore-type mechanism. This is Glycerol uptake facilitator protein (glpF) from Buchnera aphidicola subsp. Acyrthosiphon pisum (strain APS) (Acyrthosiphon pisum symbiotic bacterium).